A 314-amino-acid polypeptide reads, in one-letter code: DNA-directed RNA polymerase subunit alpha (314 aa).

The interval 1–228 (MIEFEKPKIH…EHLAIFVNLN (228 aa)) is alpha N-terminal domain (alpha-NTD). The segment at 245–314 (KEKMLEMTIE…LLGLGFRSED (70 aa)) is alpha C-terminal domain (alpha-CTD).

Belongs to the RNA polymerase alpha chain family. In terms of assembly, homodimer. The RNAP catalytic core consists of 2 alpha, 1 beta, 1 beta' and 1 omega subunit. When a sigma factor is associated with the core the holoenzyme is formed, which can initiate transcription.

The catalysed reaction is RNA(n) + a ribonucleoside 5'-triphosphate = RNA(n+1) + diphosphate. In terms of biological role, DNA-dependent RNA polymerase catalyzes the transcription of DNA into RNA using the four ribonucleoside triphosphates as substrates. In Pediococcus pentosaceus (strain ATCC 25745 / CCUG 21536 / LMG 10740 / 183-1w), this protein is DNA-directed RNA polymerase subunit alpha.